Here is a 461-residue protein sequence, read N- to C-terminus: Dihydrofolate reductase (461 aa).

Residues 233-447 (DLTMIVAVSS…VEIEFELYGK (215 aa)) form the DHFR domain. NADP(+) is bound by residues alanine 239 and 246 to 252 (GIGKKNS). A substrate-binding site is contributed by 260-265 (EMAYFA). 292 to 294 (RSC) is a binding site for NADP(+). Arginine 308 serves as a coordination point for substrate. NADP(+) is bound by residues 314-316 (TRN) and 365-372 (GGSFLYGS).

The protein belongs to the dihydrofolate reductase family.

The enzyme catalyses (6S)-5,6,7,8-tetrahydrofolate + NADP(+) = 7,8-dihydrofolate + NADPH + H(+). It participates in cofactor biosynthesis; tetrahydrofolate biosynthesis; 5,6,7,8-tetrahydrofolate from 7,8-dihydrofolate: step 1/1. Its function is as follows. Key enzyme in folate metabolism. Catalyzes an essential reaction for de novo glycine and purine synthesis, and for DNA precursor synthesis. This Schizosaccharomyces pombe (strain 972 / ATCC 24843) (Fission yeast) protein is Dihydrofolate reductase (dfr1).